The following is a 360-amino-acid chain: CCA-adding enzyme (360 aa).

Residues G8 and R11 each contribute to the ATP site. G8 and R11 together coordinate CTP. D21 and D23 together coordinate Mg(2+). R91, R137, and R140 together coordinate ATP. CTP is bound by residues R91, R137, and R140.

Belongs to the tRNA nucleotidyltransferase/poly(A) polymerase family. Bacterial CCA-adding enzyme type 2 subfamily. The cofactor is Mg(2+).

It carries out the reaction a tRNA precursor + 2 CTP + ATP = a tRNA with a 3' CCA end + 3 diphosphate. It catalyses the reaction a tRNA with a 3' CCA end + 2 CTP + ATP = a tRNA with a 3' CCACCA end + 3 diphosphate. Functionally, catalyzes the addition and repair of the essential 3'-terminal CCA sequence in tRNAs without using a nucleic acid template. Adds these three nucleotides in the order of C, C, and A to the tRNA nucleotide-73, using CTP and ATP as substrates and producing inorganic pyrophosphate. tRNA 3'-terminal CCA addition is required both for tRNA processing and repair. Also involved in tRNA surveillance by mediating tandem CCA addition to generate a CCACCA at the 3' terminus of unstable tRNAs. While stable tRNAs receive only 3'-terminal CCA, unstable tRNAs are marked with CCACCA and rapidly degraded. The chain is CCA-adding enzyme from Francisella tularensis subsp. tularensis (strain FSC 198).